A 278-amino-acid chain; its full sequence is Large ribosomal subunit protein uL2 (278 aa).

Residues glycine 223 to lysine 278 are disordered.

This sequence belongs to the universal ribosomal protein uL2 family. In terms of assembly, part of the 50S ribosomal subunit. Forms a bridge to the 30S subunit in the 70S ribosome.

In terms of biological role, one of the primary rRNA binding proteins. Required for association of the 30S and 50S subunits to form the 70S ribosome, for tRNA binding and peptide bond formation. It has been suggested to have peptidyltransferase activity; this is somewhat controversial. Makes several contacts with the 16S rRNA in the 70S ribosome. In Methylobacterium nodulans (strain LMG 21967 / CNCM I-2342 / ORS 2060), this protein is Large ribosomal subunit protein uL2.